Reading from the N-terminus, the 429-residue chain is Keratin, type I cytoskeletal 47 kDa (429 aa).

Residues 1–16 (MTSYRSSSASYYSGSS) are compositionally biased toward low complexity. Residues 1–20 (MTSYRSSSASYYSGSSSKGG) are disordered. The head stretch occupies residues 1–69 (MTSYRSSSAS…EAASSSFGGN (69 aa)). Residues 70 to 105 (EKHAMQNLNDRLASYLEKVRALEATNSDLEGKIRNW) are coil 1A. The IF rod domain occupies 70–385 (EKHAMQNLND…RLLEGELGQV (316 aa)). Residues 106-127 (YDKQSDAGIGAGSKDYSKYFEI) form a linker 1 region. Positions 128–219 (IAELRNKIRA…KNHEEEMSHA (92 aa)) are coil 1B. Residues 220–242 (KSQSAGKVSVEMDAALGVDLTSI) form a linker 12 region. A coil 2 region spans residues 243 to 381 (LNNMRADYEI…QTYRRLLEGE (139 aa)). The tail stretch occupies residues 382 to 429 (LGQVTTVANTSSVESKTESSSTSTTRTRMVKTIVEEVVDGKVVSSRVE). The interval 389–408 (ANTSSVESKTESSSTSTTRT) is disordered. Over residues 391 to 408 (TSSVESKTESSSTSTTRT) the composition is skewed to low complexity.

This sequence belongs to the intermediate filament family. In terms of assembly, heterotetramer of two type I and two type II keratins.

This is Keratin, type I cytoskeletal 47 kDa (xk81a1) from Xenopus laevis (African clawed frog).